Here is a 518-residue protein sequence, read N- to C-terminus: Protein PNS1 (518 aa).

A compositionally biased stretch (pro residues) spans 1-14; sequence MSDYPPPNYPPPNH. The disordered stretch occupies residues 1-24; that stretch reads MSDYPPPNYPPPNHPQYQQQQDET. Residues 1 to 63 are Cytoplasmic-facing; the sequence is MSDYPPPNYP…KVEKPKFNDW (63 aa). A helical membrane pass occupies residues 64–84; sequence PFAIFFWLVVAGFIAVAGITL. The Extracellular segment spans residues 85 to 111; sequence NALRSTYGFQGGSIYGSGNTFTLNTNT. The helical transmembrane segment at 112 to 132 threads the bilayer; the sequence is IILFAFIIVMAFILSAAIIVF. Over 133 to 139 the chain is Cytoplasmic; sequence ARLAPKA. A helical membrane pass occupies residues 140-160; it reads FIVTGVILNVVLGIGTAIFYF. Residues 161–163 are Extracellular-facing; sequence VEK. The helical transmembrane segment at 164 to 184 threads the bilayer; it reads YYSAAIVFLIFALFGAWCYWS. At 185-210 the chain is on the cytoplasmic side; that stretch reads SRHRIPLSATILTIVIDVMKMYPSTL. Residues 211–231 traverse the membrane as a helical segment; it reads IASFIGLIFSAAFSALFSIVI. At 232–256 the chain is on the extracellular side; sequence VATYVKYDPNSNNEACSVGGGSCSK. Residues 257–277 form a helical membrane-spanning segment; it reads GKLIGVLVFVFFAGYYISEVI. Topologically, residues 278–314 are cytoplasmic; sequence RNVIHVVIAGIYGTWYYLANSDQGAPKHPALSSLKRA. Residues 315-335 form a helical membrane-spanning segment; it reads LTYCFGSITFGSLIVSLIQLL. Over 336–351 the chain is Extracellular; that stretch reads RQFISILRSNFAADGN. The helical transmembrane segment at 352–372 threads the bilayer; it reads GWGVCGMIILDFFVGFIDWLV. Residues 373–417 are Cytoplasmic-facing; it reads RYLNKYAYCYVALYGKSYIKSAKDTFDLIRFKGMDALINDMFINT. The helical transmembrane segment at 418–438 threads the bilayer; the sequence is ALNLYSLFVAYLVALLAYLYL. The Extracellular portion of the chain corresponds to 439–445; sequence KFTKPEY. The chain crosses the membrane as a helical span at residues 446–466; the sequence is NSGGAFYAPVIAFAFLIAGQI. The Cytoplasmic segment spans residues 467–518; the sequence is NRISLTVIESGTATFFVALAKDPEIFQMTNRNRFDDIFRNYPQVLEKITSDH.

It belongs to the CTL (choline transporter-like) family.

The protein resides in the cell membrane. In terms of biological role, probably involved in transport through the plasma membrane. This chain is Protein PNS1 (PNS1), found in Candida albicans (strain SC5314 / ATCC MYA-2876) (Yeast).